The following is a 596-amino-acid chain: Protein NRT1/ PTR FAMILY 3.1 (596 aa).

Residues 1–16 (MEEQSKNKISEEEKQL) show a composition bias toward basic and acidic residues. The interval 1–23 (MEEQSKNKISEEEKQLHGRPNRP) is disordered. Transmembrane regions (helical) follow at residues 27-47 (LITM…VVGF), 73-93 (FAGT…SFAG), 98-118 (ITFA…SAII), 137-157 (TAQL…SGGI), 185-205 (NWYY…LVWI), 213-233 (LGLG…VGGF), 334-354 (MGPI…QGTF), 372-392 (IPAG…IIFY), 416-436 (MGIG…VEVK), 453-473 (IVPI…VAEA), 497-517 (ALFW…VTLV), and 542-562 (YFYW…LWCA).

The protein belongs to the major facilitator superfamily. Proton-dependent oligopeptide transporter (POT/PTR) (TC 2.A.17) family. Expressed in shoots, stems, leaves, flowers and siliques.

The protein localises to the membrane. Its function is as follows. May act as an efflux-type nitrite transporter. Not regulated by the PII protein involved in the regulation of nitrite uptake into higher plant chloroplasts. In Arabidopsis thaliana (Mouse-ear cress), this protein is Protein NRT1/ PTR FAMILY 3.1 (NPF3.1).